The chain runs to 102 residues: Protein RnfH (102 aa).

Belongs to the UPF0125 (RnfH) family.

In Pseudomonas entomophila (strain L48), this protein is Protein RnfH.